The chain runs to 382 residues: Mannitol-1-phosphate 5-dehydrogenase (382 aa).

3-14 serves as a coordination point for NAD(+); the sequence is ALHFGAGNIGRG.

It belongs to the mannitol dehydrogenase family.

The catalysed reaction is D-mannitol 1-phosphate + NAD(+) = beta-D-fructose 6-phosphate + NADH + H(+). The protein is Mannitol-1-phosphate 5-dehydrogenase of Pectobacterium atrosepticum (strain SCRI 1043 / ATCC BAA-672) (Erwinia carotovora subsp. atroseptica).